A 227-amino-acid polypeptide reads, in one-letter code: Cytochrome c oxidase subunit 2 (227 aa).

Residues 1–14 are Mitochondrial intermembrane-facing; it reads MAYPVQLGFQDAAS. The chain crosses the membrane as a helical span at residues 15 to 45; the sequence is PIMEELLYFHDHTLMIMFLISSLVLYIISLM. At 46-59 the chain is on the mitochondrial matrix side; it reads LTTELMHTNTMDAQ. Residues 60–87 form a helical membrane-spanning segment; it reads EVETVWTILPAAILILIALPSLRILYMM. Topologically, residues 88–227 are mitochondrial intermembrane; it reads DEITTPSLTL…HFEEWLLSML (140 aa). Cu cation contacts are provided by His-161, Cys-196, Glu-198, Cys-200, His-204, and Met-207. Position 198 (Glu-198) interacts with Mg(2+).

This sequence belongs to the cytochrome c oxidase subunit 2 family. In terms of assembly, component of the cytochrome c oxidase (complex IV, CIV), a multisubunit enzyme composed of 14 subunits. The complex is composed of a catalytic core of 3 subunits MT-CO1, MT-CO2 and MT-CO3, encoded in the mitochondrial DNA, and 11 supernumerary subunits COX4I, COX5A, COX5B, COX6A, COX6B, COX6C, COX7A, COX7B, COX7C, COX8 and NDUFA4, which are encoded in the nuclear genome. The complex exists as a monomer or a dimer and forms supercomplexes (SCs) in the inner mitochondrial membrane with NADH-ubiquinone oxidoreductase (complex I, CI) and ubiquinol-cytochrome c oxidoreductase (cytochrome b-c1 complex, complex III, CIII), resulting in different assemblies (supercomplex SCI(1)III(2)IV(1) and megacomplex MCI(2)III(2)IV(2)). Found in a complex with TMEM177, COA6, COX18, COX20, SCO1 and SCO2. Interacts with TMEM177 in a COX20-dependent manner. Interacts with COX20. Interacts with COX16. The cofactor is Cu cation.

It is found in the mitochondrion inner membrane. The enzyme catalyses 4 Fe(II)-[cytochrome c] + O2 + 8 H(+)(in) = 4 Fe(III)-[cytochrome c] + 2 H2O + 4 H(+)(out). Component of the cytochrome c oxidase, the last enzyme in the mitochondrial electron transport chain which drives oxidative phosphorylation. The respiratory chain contains 3 multisubunit complexes succinate dehydrogenase (complex II, CII), ubiquinol-cytochrome c oxidoreductase (cytochrome b-c1 complex, complex III, CIII) and cytochrome c oxidase (complex IV, CIV), that cooperate to transfer electrons derived from NADH and succinate to molecular oxygen, creating an electrochemical gradient over the inner membrane that drives transmembrane transport and the ATP synthase. Cytochrome c oxidase is the component of the respiratory chain that catalyzes the reduction of oxygen to water. Electrons originating from reduced cytochrome c in the intermembrane space (IMS) are transferred via the dinuclear copper A center (CU(A)) of subunit 2 and heme A of subunit 1 to the active site in subunit 1, a binuclear center (BNC) formed by heme A3 and copper B (CU(B)). The BNC reduces molecular oxygen to 2 water molecules using 4 electrons from cytochrome c in the IMS and 4 protons from the mitochondrial matrix. The polypeptide is Cytochrome c oxidase subunit 2 (MT-CO2) (Hapalemur griseus (Gray gentle lemur)).